Here is a 368-residue protein sequence, read N- to C-terminus: C-X-C chemokine receptor type 3 (368 aa).

Topologically, residues 1–53 (MVLEVSDHQVLNDAEVAALLENFSSSYDYGENESDSCCTSPPCPQDFSLNFDR) are extracellular. N-linked (GlcNAc...) asparagine glycosylation is present at Asn-22. Tyr-27 and Tyr-29 each carry sulfotyrosine. Asn-32 is a glycosylation site (N-linked (GlcNAc...) asparagine). The chain crosses the membrane as a helical span at residues 54-80 (AFLPALYSLLFLLGLLGNGAVAAVLLS). At 81–89 (RRTALSSTD) the chain is on the cytoplasmic side. Residues 90-110 (TFLLHLAVADTLLVLTLPLWA) traverse the membrane as a helical segment. Topologically, residues 111-125 (VDAAVQWVFGSGLCK) are extracellular. Cys-124 and Cys-203 are oxidised to a cystine. The helical transmembrane segment at 126 to 147 (VAGALFNINFYAGALLLACISF) threads the bilayer. At 148–169 (DRYLNIVHATQLYRRGPPARVT) the chain is on the cytoplasmic side. Residues 170-189 (LTCLAVWGLCLLFALPDFIF) traverse the membrane as a helical segment. Residues 190–212 (LSAHHDERLNATHCQYNFPQVGR) are Extracellular-facing. Residues 213–233 (TALRVLQLVAGFLLPLLVMAY) traverse the membrane as a helical segment. Residues 234–255 (CYAHILAVLLVSRGQRRLRAMR) lie on the Cytoplasmic side of the membrane. Residues 256 to 277 (LVVVVVVAFALCWTPYHLVVLV) form a helical membrane-spanning segment. The Extracellular portion of the chain corresponds to 278–298 (DILMDLGALARNCGRESRVDV). Residues 299-321 (AKSVTSGLGYMHCCLNPLLYAFV) traverse the membrane as a helical segment. At 322 to 368 (GVKFRERMWMLLLRLGCPNQRGLQRQPSSSRRDSSWSETSEASYSGL) the chain is on the cytoplasmic side. The segment at 342–368 (RGLQRQPSSSRRDSSWSETSEASYSGL) is disordered. Positions 357-368 (WSETSEASYSGL) are enriched in low complexity.

It belongs to the G-protein coupled receptor 1 family. As to quaternary structure, homomer. Forms heteromers with ACKR4. Interacts with PF4/CXCL4. Sulfation on Tyr-27 and Tyr-29 is essential for CXCL10 binding and subsequent signal transduction induction. In terms of processing, N-glycosylated. As to expression, isoform 1 and isoform 2 are mainly expressed in heart, kidney, liver and skeletal muscle. Isoform 1 is also expressed in placenta. Isoform 2 is expressed in endothelial cells. Expressed in T-cells (at protein level).

The protein resides in the cell membrane. In terms of biological role, receptor for the C-X-C chemokine CXCL9, CXCL10 and CXCL11 and mediates the proliferation, survival and angiogenic activity of human mesangial cells (HMC) through a heterotrimeric G-protein signaling pathway. Binds to CCL21. Probably promotes cell chemotaxis response. Upon activation by PF4, induces activated T-lymphocytes migration mediated via downstream Ras/extracellular signal-regulated kinase (ERK) signaling. Functionally, receptor for the C-X-C chemokine CXCL4 and also mediates the inhibitory activities of CXCL9, CXCL10 and CXCL11 on the proliferation, survival and angiogenic activity of human microvascular endothelial cells (HMVEC) through a cAMP-mediated signaling pathway. Does not promote cell chemotaxis respons. Interaction with CXCL4 or CXCL10 leads to activation of the p38MAPK pathway and contributes to inhibition of angiogenesis. Overexpression in renal cancer cells down-regulates expression of the anti-apoptotic protein HMOX1 and promotes apoptosis. Mediates the activity of CXCL11. The protein is C-X-C chemokine receptor type 3 (CXCR3) of Homo sapiens (Human).